The primary structure comprises 393 residues: 4-hydroxyphenylpyruvate dioxygenase (393 aa).

Residue Thr-2 is modified to N-acetylthreonine. 2 VOC domains span residues His-18–Lys-149 and Met-180–Lys-338. N6-succinyllysine is present on Lys-132. His-183 contributes to the Fe cation binding site. A phosphoserine mark is found at Ser-211, Ser-226, and Ser-250. Fe cation contacts are provided by His-266 and Glu-349.

This sequence belongs to the 4HPPD family. In terms of assembly, homodimer. The cofactor is Fe cation.

It localises to the cytoplasm. The protein localises to the endoplasmic reticulum membrane. Its subcellular location is the golgi apparatus membrane. It catalyses the reaction 3-(4-hydroxyphenyl)pyruvate + O2 = homogentisate + CO2. It participates in amino-acid degradation; L-phenylalanine degradation; acetoacetate and fumarate from L-phenylalanine: step 3/6. Its function is as follows. Catalyzes the conversion of 4-hydroxyphenylpyruvic acid to homogentisic acid, one of the steps in tyrosine catabolism. The protein is 4-hydroxyphenylpyruvate dioxygenase (HPD) of Homo sapiens (Human).